We begin with the raw amino-acid sequence, 1282 residues long: Trafficking protein particle complex subunit 8 (1282 aa).

The disordered stretch occupies residues 245-287; that stretch reads TDAIAPGPNGASNQQSPSSPTSSVATISSTMPAVGSVSPNSHP. The span at 255–273 shows a compositional bias: low complexity; the sequence is ASNQQSPSSPTSSVATISS.

Plays a role in endoplasmic reticulum to Golgi apparatus trafficking at a very early stage. Involved in collagen secretion. This chain is Trafficking protein particle complex subunit 8, found in Caenorhabditis elegans.